The sequence spans 141 residues: uncharacterized protein (141 aa).

The interval 1–61 (IRLLHSLTPP…PPPPPPPRRA (61 aa)) is disordered. Pro residues predominate over residues 8 to 58 (TPPPPPPPPPPPPPPPPPPPPPPPPPPPPPPPPPPPPPPPPPPPPPPPPPP). The segment at residues 98 to 116 (KRLLVAYPVRHFLSAACQF) is a DNA-binding region (H-T-H motif).

This is an uncharacterized protein from Owenia fusiformis (Polychaete worm).